The chain runs to 310 residues: Manganese ABC transporter substrate-binding lipoprotein scaA (310 aa).

The first 19 residues, 1-19, serve as a signal peptide directing secretion; it reads MKKCRFLVLLLLAFVGLAA. The N-palmitoyl cysteine moiety is linked to residue C20. C20 carries S-diacylglycerol cysteine lipidation. Positions 68, 140, 206, and 281 each coordinate Mn(2+).

Belongs to the bacterial solute-binding protein 9 family. Lipoprotein receptor antigen (Lrai) subfamily. As to quaternary structure, the complex is composed of two ATP-binding proteins (ScaC), two transmembrane proteins (ScaB) and a solute-binding protein (ScaA).

Its subcellular location is the cell membrane. Functionally, part of ATP-binding cassette (ABC) transport system ScaABC involved in manganese import. Essential for growth under Mn(2+)-limiting conditions. Also acts as an adhesin which is involved on adherence to extracellular matrix. It is an important factor in pathogenesis and infection. The protein is Manganese ABC transporter substrate-binding lipoprotein scaA of Streptococcus gordonii.